The sequence spans 437 residues: 26S proteasome regulatory subunit 4 homolog (437 aa).

A disordered region spans residues 1–47 (MGQGVSSGQDKKKKKGSNQKPKYEPPVQSKFGRKKRKGGPATAEKLP). G2 is lipidated: N-myristoyl glycine. Residue 223 to 230 (GAPGTGKT) coordinates ATP. Glycyl lysine isopeptide (Lys-Gly) (interchain with G-Cter in ubiquitin) cross-links involve residues K234, K255, and K290.

Belongs to the AAA ATPase family.

The protein localises to the cytoplasm. It is found in the nucleus. The 26S proteasome is involved in the ATP-dependent degradation of ubiquitinated proteins. The regulatory (or ATPase) complex confers ATP dependency and substrate specificity to the 26S complex. Has ATPase activity. This is 26S proteasome regulatory subunit 4 homolog (RPT2) from Saccharomyces cerevisiae (strain ATCC 204508 / S288c) (Baker's yeast).